We begin with the raw amino-acid sequence, 425 residues long: Exodeoxyribonuclease 7 large subunit (425 aa).

Belongs to the XseA family. In terms of assembly, heterooligomer composed of large and small subunits.

It is found in the cytoplasm. The catalysed reaction is Exonucleolytic cleavage in either 5'- to 3'- or 3'- to 5'-direction to yield nucleoside 5'-phosphates.. Its function is as follows. Bidirectionally degrades single-stranded DNA into large acid-insoluble oligonucleotides, which are then degraded further into small acid-soluble oligonucleotides. The sequence is that of Exodeoxyribonuclease 7 large subunit from Nocardia farcinica (strain IFM 10152).